Here is a 252-residue protein sequence, read N- to C-terminus: LexA repressor (252 aa).

A disordered region spans residues 1-46 (MPEENRGGHQPYTEESSVSALHPVRTDDSVGSSAEQTGDAPTLTER). A DNA-binding region (H-T-H motif) is located at residues 67–87 (IREIGEAVGLSSPSSVAHQLK). Residues serine 176 and lysine 213 each act as for autocatalytic cleavage activity in the active site.

The protein belongs to the peptidase S24 family. In terms of assembly, homodimer.

It carries out the reaction Hydrolysis of Ala-|-Gly bond in repressor LexA.. Its function is as follows. Represses a number of genes involved in the response to DNA damage (SOS response), including recA and lexA. In the presence of single-stranded DNA, RecA interacts with LexA causing an autocatalytic cleavage which disrupts the DNA-binding part of LexA, leading to derepression of the SOS regulon and eventually DNA repair. The sequence is that of LexA repressor from Thermobifida fusca (strain YX).